A 71-amino-acid chain; its full sequence is Brevinin-1SN2 (71 aa).

A signal peptide spans 1 to 22 (MFTMKKSLLLIFFLGTINLSLC). A propeptide spans 23-45 (EEERNADEDEKRDGDDESDVEVQ) (removed in mature form). C65 and C71 are oxidised to a cystine.

It belongs to the frog skin active peptide (FSAP) family. Brevinin subfamily. As to expression, expressed by the skin glands.

It is found in the secreted. In terms of biological role, antimicrobial peptide. Active against a variety of Gram-negative and Gram-positive bacterial strains. Active against fungus C.glabrata 090902 and C.albicans ATCC 10231. Shows hemolytic activity against human erythrocytes. The chain is Brevinin-1SN2 from Sylvirana spinulosa (Fine-spined frog).